Consider the following 219-residue polypeptide: uncharacterized protein (219 aa).

This is an uncharacterized protein from Acanthamoeba polyphaga mimivirus (APMV).